We begin with the raw amino-acid sequence, 127 residues long: Small ribosomal subunit protein uS8m (127 aa).

It belongs to the universal ribosomal protein uS8 family.

The protein localises to the mitochondrion. The sequence is that of Small ribosomal subunit protein uS8m (RPS8) from Acanthamoeba castellanii (Amoeba).